A 223-amino-acid polypeptide reads, in one-letter code: Protein Wnt-1 (223 aa).

3 cysteine pairs are disulfide-bonded: cysteine 7/cysteine 24, cysteine 72/cysteine 86, and cysteine 74/cysteine 81. A lipid anchor (O-palmitoleoyl serine; by PORCN) is attached at serine 78. Residues 110–135 form a disordered region; the sequence is VTMRNDGSPSDRETESSFVPYNPSHK. Residues 125-135 show a composition bias toward polar residues; that stretch reads SSFVPYNPSHK. 6 cysteine pairs are disulfide-bonded: cysteine 152–cysteine 183, cysteine 168–cysteine 178, cysteine 182–cysteine 222, cysteine 198–cysteine 213, cysteine 200–cysteine 210, and cysteine 205–cysteine 206. Asparagine 169 carries an N-linked (GlcNAc...) asparagine glycan.

The protein belongs to the Wnt family. In terms of processing, palmitoleoylation is required for efficient binding to frizzled receptors. Palmitoleoylation is necessary for proper trafficking to cell surface. Depalmitoleoylated by NOTUM, leading to inhibit Wnt signaling pathway.

The protein resides in the secreted. It is found in the extracellular space. The protein localises to the extracellular matrix. Ligand for members of the frizzled family of seven transmembrane receptors. Probable developmental protein. The chain is Protein Wnt-1 (WNT-1) from Strongylocentrotus purpuratus (Purple sea urchin).